We begin with the raw amino-acid sequence, 431 residues long: Adenylosuccinate synthetase (431 aa).

GTP-binding positions include 12–18 (GDEGKGK) and 40–42 (GHT). D13 acts as the Proton acceptor in catalysis. 2 residues coordinate Mg(2+): D13 and G40. IMP contacts are provided by residues 13–16 (DEGK), 38–41 (NAGH), T131, R145, Q225, T240, and R304. Catalysis depends on H41, which acts as the Proton donor. A substrate-binding site is contributed by 300-306 (TTTGRKR). GTP-binding positions include R306, 332-334 (KLD), and 414-416 (STS).

The protein belongs to the adenylosuccinate synthetase family. As to quaternary structure, homodimer. Mg(2+) is required as a cofactor.

The protein resides in the cytoplasm. The catalysed reaction is IMP + L-aspartate + GTP = N(6)-(1,2-dicarboxyethyl)-AMP + GDP + phosphate + 2 H(+). It participates in purine metabolism; AMP biosynthesis via de novo pathway; AMP from IMP: step 1/2. In terms of biological role, plays an important role in the de novo pathway of purine nucleotide biosynthesis. Catalyzes the first committed step in the biosynthesis of AMP from IMP. This is Adenylosuccinate synthetase from Dinoroseobacter shibae (strain DSM 16493 / NCIMB 14021 / DFL 12).